The chain runs to 874 residues: Alanine--tRNA ligase (874 aa).

Zn(2+) contacts are provided by His-563, His-567, Cys-665, and His-669.

This sequence belongs to the class-II aminoacyl-tRNA synthetase family. Requires Zn(2+) as cofactor.

The protein localises to the cytoplasm. The catalysed reaction is tRNA(Ala) + L-alanine + ATP = L-alanyl-tRNA(Ala) + AMP + diphosphate. Its function is as follows. Catalyzes the attachment of alanine to tRNA(Ala) in a two-step reaction: alanine is first activated by ATP to form Ala-AMP and then transferred to the acceptor end of tRNA(Ala). Also edits incorrectly charged Ser-tRNA(Ala) and Gly-tRNA(Ala) via its editing domain. The polypeptide is Alanine--tRNA ligase (Actinobacillus pleuropneumoniae serotype 3 (strain JL03)).